Here is a 334-residue protein sequence, read N- to C-terminus: Ornithine carbamoyltransferase (334 aa).

Residues 57–60 (STRT), Q84, R108, and 135–138 (HPTQ) contribute to the carbamoyl phosphate site. Residues N168, D232, and 236-237 (SM) each bind L-ornithine. Carbamoyl phosphate contacts are provided by residues 274 to 275 (CL) and R321.

Belongs to the aspartate/ornithine carbamoyltransferase superfamily. OTCase family.

It is found in the cytoplasm. It catalyses the reaction carbamoyl phosphate + L-ornithine = L-citrulline + phosphate + H(+). It functions in the pathway amino-acid biosynthesis; L-arginine biosynthesis; L-arginine from L-ornithine and carbamoyl phosphate: step 1/3. Functionally, reversibly catalyzes the transfer of the carbamoyl group from carbamoyl phosphate (CP) to the N(epsilon) atom of ornithine (ORN) to produce L-citrulline. The chain is Ornithine carbamoyltransferase from Actinobacillus pleuropneumoniae serotype 5b (strain L20).